Here is an 85-residue protein sequence, read N- to C-terminus: Large ribosomal subunit protein bL27 (85 aa).

Residues 1–22 (MAHKKAGGSTRNGRDSESKRLG) form a disordered region.

Belongs to the bacterial ribosomal protein bL27 family.

This is Large ribosomal subunit protein bL27 from Aliivibrio salmonicida (strain LFI1238) (Vibrio salmonicida (strain LFI1238)).